Reading from the N-terminus, the 490-residue chain is Homoserine O-acetyltransferase (490 aa).

In terms of domain architecture, AB hydrolase-1 spans 48–354 (NVILVCHALT…NSEYGHDAFL (307 aa)). The active-site Nucleophile is S153. R223 contributes to the substrate binding site. Residues D317 and H350 contribute to the active site. D351 provides a ligand contact to substrate. CBS domains follow at residues 377-434 (MSHT…ANSI) and 438-490 (MTKN…LYEK).

This sequence belongs to the AB hydrolase superfamily. MetX family. As to quaternary structure, homodimer.

Its subcellular location is the cytoplasm. It catalyses the reaction L-homoserine + acetyl-CoA = O-acetyl-L-homoserine + CoA. It participates in amino-acid biosynthesis; L-methionine biosynthesis via de novo pathway; O-acetyl-L-homoserine from L-homoserine: step 1/1. Transfers an acetyl group from acetyl-CoA to L-homoserine, forming acetyl-L-homoserine. This chain is Homoserine O-acetyltransferase, found in Methanosphaera stadtmanae (strain ATCC 43021 / DSM 3091 / JCM 11832 / MCB-3).